The chain runs to 530 residues: MKESILSDLLNRRLSLLGANLDLLKQCLHGIERECLRVTDDGRLAQTPHPEALGSALTNEQITTDYSESLLEFITPALADPAKVLDSLEEIHRFVYTKLGGEYLWSPSMPCALPAEEDIPIAEYGSSNIGKLKHVYRKGLALRYGRTMQCIAGIHYNFSLPEALWPLLRDAEGGEQNDRDYQSSAYIALIRNFRRYSWLLMYLFGASPTLDKGFLRGRPHQLEELDEQTLYLPYATSLRMSDLGYQSNAQAGLTPCYNNLASYTDSLRKAVGTPYPPYVEVGTHKDGEWVQLNTNILQIENEYYSNIRPKRVTYTGERPIQALMSRGVQYVEVRCLDINPFLPVGIDLPEARFLDAFLLFCALEESPQLDNGECGQCTDNFLTVVKEGRRPGLELRRDGQPVALKAWATELIERIGQLAGLLDRAHGGNAHAKALETQQAKVDDPELTPSAQVLARMTEHDETFVQFSLRQSRLHAEAFREQPLPAERQQAYETLARESLAEQSRLEQQEVGDFDLFVGAYQASILAISN.

This sequence belongs to the glutamate--cysteine ligase type 1 family. Type 1 subfamily.

It catalyses the reaction L-cysteine + L-glutamate + ATP = gamma-L-glutamyl-L-cysteine + ADP + phosphate + H(+). Its pathway is sulfur metabolism; glutathione biosynthesis; glutathione from L-cysteine and L-glutamate: step 1/2. The protein is Glutamate--cysteine ligase of Pseudomonas entomophila (strain L48).